A 173-amino-acid polypeptide reads, in one-letter code: Small ribosomal subunit protein uS7 (173 aa).

This sequence belongs to the universal ribosomal protein uS7 family. Part of the 30S ribosomal subunit. Contacts proteins S9 and S11.

In terms of biological role, one of the primary rRNA binding proteins, it binds directly to 16S rRNA where it nucleates assembly of the head domain of the 30S subunit. Is located at the subunit interface close to the decoding center, probably blocks exit of the E-site tRNA. This chain is Small ribosomal subunit protein uS7, found in Orientia tsutsugamushi (strain Ikeda) (Rickettsia tsutsugamushi).